We begin with the raw amino-acid sequence, 207 residues long: Large ribosomal subunit protein uL4 (207 aa).

The segment at 53–76 (TVSEVSGTTKKPFKQKGTGNARQG) is disordered.

Belongs to the universal ribosomal protein uL4 family. As to quaternary structure, part of the 50S ribosomal subunit.

Its function is as follows. One of the primary rRNA binding proteins, this protein initially binds near the 5'-end of the 23S rRNA. It is important during the early stages of 50S assembly. It makes multiple contacts with different domains of the 23S rRNA in the assembled 50S subunit and ribosome. In terms of biological role, forms part of the polypeptide exit tunnel. In Rickettsia bellii (strain OSU 85-389), this protein is Large ribosomal subunit protein uL4.